The primary structure comprises 140 residues: Large ribosomal subunit protein bL17 (140 aa).

A compositionally biased stretch (basic and acidic residues) spans 119-133; it reads DPSAKGAADRARLEE. A disordered region spans residues 119–140; sequence DPSAKGAADRARLEEEGGMTEE.

This sequence belongs to the bacterial ribosomal protein bL17 family. Part of the 50S ribosomal subunit. Contacts protein L32.

The protein is Large ribosomal subunit protein bL17 of Maricaulis maris (strain MCS10) (Caulobacter maris).